Reading from the N-terminus, the 282-residue chain is Deoxyribonuclease-1 (282 aa).

A signal peptide spans 1-22 (MRGMKLLGALLALAALLQGAVS). N40 carries N-linked (GlcNAc...) asparagine glycosylation. The active site involves E100. Cysteines 123 and 126 form a disulfide. N128 carries N-linked (GlcNAc...) asparagine glycosylation. H156 is a catalytic residue. C195 and C231 are disulfide-bonded.

The protein belongs to the DNase I family. It depends on Ca(2+) as a cofactor. Mg(2+) serves as cofactor. Principally in tissues of the digestive system. Highest levels found in urine, but also relatively abundant in semen and saliva.

It is found in the secreted. It localises to the zymogen granule. The protein resides in the nucleus envelope. It carries out the reaction Endonucleolytic cleavage to 5'-phosphodinucleotide and 5'-phosphooligonucleotide end-products.. In terms of biological role, serum endocuclease secreted into body fluids by a wide variety of exocrine and endocrine organs. Expressed by non-hematopoietic tissues and preferentially cleaves protein-free DNA. Among other functions, seems to be involved in cell death by apoptosis. Binds specifically to G-actin and blocks actin polymerization. Together with DNASE1L3, plays a key role in degrading neutrophil extracellular traps (NETs). NETs are mainly composed of DNA fibers and are released by neutrophils to bind pathogens during inflammation. Degradation of intravascular NETs by DNASE1 and DNASE1L3 is required to prevent formation of clots that obstruct blood vessels and cause organ damage following inflammation. The sequence is that of Deoxyribonuclease-1 from Homo sapiens (Human).